A 1061-amino-acid polypeptide reads, in one-letter code: Ceruloplasmin (1061 aa).

Positions 1 to 19 (MKFLLLSTFIFLYSSLALA) are cleaved as a signal peptide. 6 Plastocyanin-like domains span residues 20-199 (RDKH…LILC), 208-356 (KEKN…VRDC), 369-555 (HVRH…MKIC), 565-713 (RQKD…VNQC), 725-895 (GERT…LIVC), and 903-1057 (FSPK…VEQE). Na(+)-binding residues include Tyr-55, Gly-64, and Tyr-67. His-120 and His-122 together coordinate Cu(2+). An O2-binding site is contributed by His-120. Residue Lys-128 coordinates Ca(2+). N-linked (GlcNAc...) asparagine glycosylation occurs at Asn-138. Ca(2+)-binding residues include Gln-143, Asp-146, and Asp-147. Cys-173 and Cys-199 are oxidised to a cystine. Positions 179 and 181 each coordinate Cu(2+). Position 179 (His-179) interacts with O2. An N-linked (GlcNAc...) asparagine glycan is attached at Asn-226. Residue Ser-255 coordinates Na(+). A disulfide bridge links Cys-275 with Cys-356. Cu(2+) is bound by residues His-294, Cys-337, and His-342. An N-linked (GlcNAc...) asparagine glycan is attached at Asn-396. Residues Phe-407, Gly-416, and Tyr-419 each contribute to the Na(+) site. A disulfide bond links Cys-529 and Cys-555. Asn-583 carries N-linked (GlcNAc...) asparagine glycosylation. Ser-612 lines the Na(+) pocket. Cys-632 and Cys-713 are disulfide-bonded. Residues His-651, Cys-694, His-699, and Met-704 each contribute to the Cu(2+) site. The Nucleophile; for glutathione peroxidase activity role is filled by Cys-694. An N-linked (GlcNAc...) asparagine glycan is attached at Asn-757. Positions 762, 771, and 774 each coordinate Na(+). Residues Cys-869 and Cys-895 are joined by a disulfide bond. Residue Asn-921 is glycosylated (N-linked (GlcNAc...) asparagine). Ser-950 serves as a coordination point for Na(+). Cu(2+)-binding residues include His-989, His-992, His-994, His-1034, Cys-1035, His-1036, His-1040, and Met-1045. His-992 and His-994 together coordinate O2. O2 is bound at residue His-1036.

It belongs to the multicopper oxidase family. As to quaternary structure, found in a complex with MPO and LTF; interacts directly with MPO and LTF, which allows Fe(3+) incorporation into LTF, activation of CP ferroxidase activity and protection of CP antioxidant properties by MPO. The cofactor is Cu(2+). In terms of tissue distribution, expressed in many tissues, including liver, eye and brain.

Its subcellular location is the secreted. The enzyme catalyses 4 Fe(2+) + O2 + 4 H(+) = 4 Fe(3+) + 2 H2O. It catalyses the reaction 4 Cu(+) + O2 + 4 H(+) = 4 Cu(2+) + 2 H2O. It carries out the reaction a hydroperoxide + 2 glutathione = an alcohol + glutathione disulfide + H2O. The catalysed reaction is 4 nitric oxide + O2 + 2 H2O = 4 nitrite + 4 H(+). The enzyme catalyses 2 glutathione + H2O2 = glutathione disulfide + 2 H2O. In terms of biological role, multifunctional blue, copper-binding (6-7 atoms per molecule) glycoprotein. It has ferroxidase activity oxidizing Fe(2+) to Fe(3+) without releasing radical oxygen species. It is involved in iron transport across the cell membrane. Copper ions provide a large number of enzymatic activites. Oxidizes highly toxic ferrous ions to the ferric state for further incorporation onto apo-transferrins, catalyzes Cu(+) oxidation and promotes the oxidation of biogenic amines such as norepinephrin and serotonin. Provides Cu(2+) ions for the ascorbate-mediated deaminase degradation of the heparan sulfate chains of GPC1. Has glutathione peroxidase-like activity, can remove both hydrogen peroxide and lipid hydroperoxide in the presence of thiols. Also shows NO-oxidase and NO2 synthase activities that determine endocrine NO homeostasis. The polypeptide is Ceruloplasmin (Cp) (Mus musculus (Mouse)).